The chain runs to 239 residues: Tetraspanin-9 (239 aa).

Over 1 to 13 (MARGCLCCLKYTM) the chain is Cytoplasmic. Residues 14-34 (FLFNLIFWLCGCGLLGVGIWL) traverse the membrane as a helical segment. Topologically, residues 35–55 (SVSQGNFATFSPSFPSLSAAN) are extracellular. The helical transmembrane segment at 56-76 (LVIAIGTIVMVTGFLGCLGAI) threads the bilayer. The Cytoplasmic portion of the chain corresponds to 77–85 (KENKCLLLS). Residues 86 to 106 (FFIVLLIILLAELILIILFFV) traverse the membrane as a helical segment. The Extracellular portion of the chain corresponds to 107–203 (YMDKVNENAK…VKLWFDDNKH (97 aa)). Asn180 carries an N-linked (GlcNAc...) asparagine glycan. The helical transmembrane segment at 204 to 224 (VLGTVGMCILIMQILGMAFSM) threads the bilayer. Residues 225 to 239 (TLFQHIHRTGKKYDA) lie on the Cytoplasmic side of the membrane.

It belongs to the tetraspanin (TM4SF) family. Found in a complex with GP6. Post-translationally, glycosylated. Strongly expressed in megakaryocytes, platelets and lung. Weakly expressed in bone marrow, brain and kidney (at protein level).

The protein resides in the membrane. This is Tetraspanin-9 (Tspan9) from Mus musculus (Mouse).